The following is a 153-amino-acid chain: Ribonuclease H (153 aa).

In terms of domain architecture, RNase H type-1 spans 7-148 (PADLVEMWTD…ADMLANQGVA (142 aa)). Residues Asp-16, Glu-54, Asp-76, and Asp-140 each coordinate Mg(2+).

It belongs to the RNase H family. As to quaternary structure, monomer. The cofactor is Mg(2+).

Its subcellular location is the cytoplasm. It catalyses the reaction Endonucleolytic cleavage to 5'-phosphomonoester.. In terms of biological role, endonuclease that specifically degrades the RNA of RNA-DNA hybrids. The polypeptide is Ribonuclease H (Bordetella avium (strain 197N)).